We begin with the raw amino-acid sequence, 85 residues long: Probable Thioredoxin (85 aa).

In terms of domain architecture, Glutaredoxin spans 2–85 (VVNIEVFTSP…LFEAINDEME (84 aa)). C13 and C16 form a disulfide bridge.

This sequence belongs to the glutaredoxin family.

Its subcellular location is the cytoplasm. In terms of biological role, acts to maintain redox homeostasis; functions as a protein disulfide reductase. In Methanothermobacter thermautotrophicus (strain ATCC 29096 / DSM 1053 / JCM 10044 / NBRC 100330 / Delta H) (Methanobacterium thermoautotrophicum), this protein is Probable Thioredoxin.